The sequence spans 177 residues: Large ribosomal subunit protein uL6 (177 aa).

This sequence belongs to the universal ribosomal protein uL6 family. Part of the 50S ribosomal subunit.

In terms of biological role, this protein binds to the 23S rRNA, and is important in its secondary structure. It is located near the subunit interface in the base of the L7/L12 stalk, and near the tRNA binding site of the peptidyltransferase center. In Roseobacter denitrificans (strain ATCC 33942 / OCh 114) (Erythrobacter sp. (strain OCh 114)), this protein is Large ribosomal subunit protein uL6.